The primary structure comprises 112 residues: MKEKTTQLYEGAYVFSVTLSEEARRKALEKVTSGIINYGGEILKIHDQGRKKLAYTIRGAREGYYYLIYFSVVPGVIAELWKEYHLNEDLLRFLTLKTDAVKEVLEFASLPE.

This sequence belongs to the bacterial ribosomal protein bS6 family.

Functionally, binds together with bS18 to 16S ribosomal RNA. The sequence is that of Small ribosomal subunit protein bS6 from Chlamydia felis (strain Fe/C-56) (Chlamydophila felis).